Here is a 666-residue protein sequence, read N- to C-terminus: Probable potassium transport system protein Kup (666 aa).

Helical transmembrane passes span 16 to 36 (GFII…LYTM), 58 to 78 (ISLI…LIAL), 100 to 120 (PWLI…GALT), 141 to 161 (IYQN…VLFG), 165 to 185 (FGTG…FSFL), 221 to 241 (IFIL…YSDL), 253 to 273 (WPFV…WILA), 292 to 312 (LTVY…QALI), 343 to 363 (LYIP…VLYF), 373 to 393 (YGLA…YYLI), 399 to 419 (PFLA…FFWA), and 424 to 444 (FMHG…VMFI).

Belongs to the HAK/KUP transporter (TC 2.A.72) family.

The protein resides in the cell membrane. The catalysed reaction is K(+)(in) + H(+)(in) = K(+)(out) + H(+)(out). In terms of biological role, transport of potassium into the cell. Likely operates as a K(+):H(+) symporter. In Streptococcus pyogenes serotype M18 (strain MGAS8232), this protein is Probable potassium transport system protein Kup.